The sequence spans 56 residues: Large ribosomal subunit protein bL33 (56 aa).

Over residues 1-12 (MASKGGREKIKL) the composition is skewed to basic and acidic residues. The interval 1 to 27 (MASKGGREKIKLESTAGTGHFYTTNKN) is disordered.

This sequence belongs to the bacterial ribosomal protein bL33 family.

This is Large ribosomal subunit protein bL33 from Leptothrix cholodnii (strain ATCC 51168 / LMG 8142 / SP-6) (Leptothrix discophora (strain SP-6)).